A 715-amino-acid chain; its full sequence is Methylcrotonoyl-CoA carboxylase subunit alpha, mitochondrial (715 aa).

Residues 1 to 38 constitute a mitochondrion transit peptide; sequence MAAAALLAAVDRNQLRRVPILLLQPREWPWKHRTVKYG. A Biotin carboxylation domain is found at 45 to 490; the sequence is ITKVLIANRG…HTDFIPQHHK (446 aa). ATP is bound at residue Lys159. Positions 163 to 360 constitute an ATP-grasp domain; it reads KSIMAAAGVP…LVEWQLRIAA (198 aa). The residue at position 193 (Lys193) is an N6-acetyllysine. Residues Lys201 and 207 to 208 each bind ATP; that span reads GG. Lys233 carries the N6-acetyllysine modification. Residues His251, His278, and Glu318 each coordinate ATP. The active site involves Arg335. At Lys490 the chain carries N6-acetyllysine. Lys577 carries the N6-acetyllysine; alternate modification. Lys577 carries the N6-succinyllysine; alternate modification. The Biotinyl-binding domain maps to 622 to 711; the sequence is SIEVGIPVPK…NRHAPLVEFE (90 aa). At Lys677 the chain carries N6-biotinyllysine.

Probably a dodecamer composed of six biotin-containing alpha subunits (MCCC1) and six beta (MCCC2) subunits. Interacts (via the biotin carboxylation domain) with SIRT4. It depends on biotin as a cofactor. In terms of processing, acetylated.

The protein localises to the mitochondrion matrix. The enzyme catalyses 3-methylbut-2-enoyl-CoA + hydrogencarbonate + ATP = 3-methyl-(2E)-glutaconyl-CoA + ADP + phosphate + H(+). It functions in the pathway amino-acid degradation; L-leucine degradation; (S)-3-hydroxy-3-methylglutaryl-CoA from 3-isovaleryl-CoA: step 2/3. Its function is as follows. Biotin-attachment subunit of the 3-methylcrotonyl-CoA carboxylase, an enzyme that catalyzes the conversion of 3-methylcrotonyl-CoA to 3-methylglutaconyl-CoA, a critical step for leucine and isovaleric acid catabolism. In Rattus norvegicus (Rat), this protein is Methylcrotonoyl-CoA carboxylase subunit alpha, mitochondrial.